The primary structure comprises 82 residues: MNENLWAAPAPKKLSKHFFGRGGPLGKETGPNLFPKKPGAGKGLGFPPTKKPRGQPRVLKKPKWNSEGLIGILHRGSDGVQF.

The first 17 residues, 1-17 (MNENLWAAPAPKKLSKH), serve as a signal peptide directing secretion. Residues 16–60 (KHFFGRGGPLGKETGPNLFPKKPGAGKGLGFPPTKKPRGQPRVLK) form a disordered region. A propeptide spanning residues 38 to 82 (PGAGKGLGFPPTKKPRGQPRVLKKPKWNSEGLIGILHRGSDGVQF) is cleaved from the precursor. Basic residues predominate over residues 50-60 (KKPRGQPRVLK).

This sequence belongs to the non-disulfide-bridged peptide (NDBP) superfamily. Short antimicrobial peptide (group 4) family. In terms of tissue distribution, expressed by the venom gland.

Its subcellular location is the secreted. The protein is Putative antimicrobial peptide 7848 of Urodacus yaschenkoi (Inland robust scorpion).